Consider the following 497-residue polypeptide: Carboxylesterase (497 aa).

Ser-185 functions as the Acyl-ester intermediate in the catalytic mechanism. Catalysis depends on charge relay system residues Glu-319 and His-415.

It belongs to the type-B carboxylesterase/lipase family.

Its subcellular location is the secreted. It carries out the reaction a carboxylic ester + H2O = an alcohol + a carboxylate + H(+). The protein is Carboxylesterase of Thermobifida fusca (strain YX).